A 170-amino-acid chain; its full sequence is Putative beta-eliminating lyase-like protein (170 aa).

At K32 the chain carries N6-(pyridoxal phosphate)lysine.

Belongs to the beta-eliminating lyase family. Pyridoxal 5'-phosphate serves as cofactor.

The chain is Putative beta-eliminating lyase-like protein from Dictyostelium discoideum (Social amoeba).